The sequence spans 493 residues: MTEPLIFEKSKSGRKGYTLPKCDVPVQEVSELIPAQFLRKAKADLPEVQENEVVRHFVKLSTLNHHVDKGMYPLGSCTMKYNPKVNEVTSALPGFSALHPLQPQESVQGALKLMYELQEWLKEICGMKAVSLQPVAGAHGELTGILLIRKYHEKQGKPRKKILVPDSAHGTNPASSAIAGYMTVGVKTNARGLTDMDDLRAKLDEDVAALMLTNPNTLGIFESQILEISELLHANGSLLYMDGANMNALLGITRPGDMGFDVVHYNLHKTFSTPHGGGGPGSGPVGVSEKLVEFLPTPAIEKKESGEKTSYCLNYDLPDSIGKMSGFYGNFSIMVRAYTYLLMHGAKGLRAVSENAIINATYLLSRLRGKFDVPYDEQIMHEFCLSGERQKTNGVKTLDMAKRLLDFGFHAPTIYFPLIVKECMMIEPTESETKETLDDFADVMLRIAEEAESNPEMVLNAPHNTPVKRLDDAYASRNINIKYTPKEKETVEA.

Position 269 is an N6-(pyridoxal phosphate)lysine (lysine 269).

Belongs to the GcvP family. C-terminal subunit subfamily. In terms of assembly, the glycine cleavage system is composed of four proteins: P, T, L and H. In this organism, the P 'protein' is a heterodimer of two subunits. Pyridoxal 5'-phosphate serves as cofactor.

It carries out the reaction N(6)-[(R)-lipoyl]-L-lysyl-[glycine-cleavage complex H protein] + glycine + H(+) = N(6)-[(R)-S(8)-aminomethyldihydrolipoyl]-L-lysyl-[glycine-cleavage complex H protein] + CO2. In terms of biological role, the glycine cleavage system catalyzes the degradation of glycine. The P protein binds the alpha-amino group of glycine through its pyridoxal phosphate cofactor; CO(2) is released and the remaining methylamine moiety is then transferred to the lipoamide cofactor of the H protein. The sequence is that of Probable glycine dehydrogenase (decarboxylating) subunit 2 from Chloroherpeton thalassium (strain ATCC 35110 / GB-78).